The sequence spans 495 residues: Cobyric acid synthase (495 aa).

In terms of domain architecture, GATase cobBQ-type spans 249-442; the sequence is KFIVKVPVVT…LHGVFDEPEA (194 aa). C330 serves as the catalytic Nucleophile. The active site involves H434.

This sequence belongs to the CobB/CobQ family. CobQ subfamily.

It participates in cofactor biosynthesis; adenosylcobalamin biosynthesis. Functionally, catalyzes amidations at positions B, D, E, and G on adenosylcobyrinic A,C-diamide. NH(2) groups are provided by glutamine, and one molecule of ATP is hydrogenolyzed for each amidation. This Aliivibrio fischeri (strain ATCC 700601 / ES114) (Vibrio fischeri) protein is Cobyric acid synthase.